Here is a 158-residue protein sequence, read N- to C-terminus: Rhombotin-2 (158 aa).

2 LIM zinc-binding domains span residues 28 to 90 (LTCG…LFGQ) and 92 to 154 (GLCA…WTKL).

As to expression, expression becomes restricted to the ventral blood island (VBI) as the embryo develops. In late neurula and early tailbud embryos, also expressed in the dorsal lateral plate (DLP), the site of definitive hematopoiesis in the tadpole. Expression in the DLP diminishes during tailbud stages. Expressed in circulating blood cells of tadpoles. Also expressed in non-hematopoietic sites, including the tailbud region and the central nervous system of early neurula embryos.

Its subcellular location is the nucleus. Its function is as follows. Transcription factor that acts synergistically with tal1/scl and gata1 to specify embryonic dorsal mesoderm to a hematopoietic fate. Induces globin gene expression together with fgf. This is Rhombotin-2 from Xenopus laevis (African clawed frog).